Consider the following 494-residue polypeptide: Protein translocase subunit SecD (494 aa).

The next 6 membrane-spanning stretches (helical) occupy residues 7–27, 322–342, 345–365, 372–392, 420–440, and 441–461; these read WFALLIALVISAFLLCINLPF, LIAALLGLSLVAIFMVSFYRL, FIAIFALSFYALFNIAIYALI, PGVAGFVLSIGMAVDANVLIF, IIDGHITTLISCISLFYLGTG, and FVKGFAATLGIGVFISLFTAL.

It belongs to the SecD/SecF family. SecD subfamily. Forms a complex with SecF. Part of the essential Sec protein translocation apparatus which comprises SecA, SecYEG and auxiliary proteins SecDF. Other proteins may also be involved.

The protein resides in the cell inner membrane. Functionally, part of the Sec protein translocase complex. Interacts with the SecYEG preprotein conducting channel. SecDF uses the proton motive force (PMF) to complete protein translocation after the ATP-dependent function of SecA. Probably participates in protein translocation into and across both the cytoplasmic and thylakoid membranes in cyanobacterial cells. This is Protein translocase subunit SecD from Prochlorococcus marinus (strain SARG / CCMP1375 / SS120).